Here is a 386-residue protein sequence, read N- to C-terminus: Probable serine/threonine-protein kinase PBL23 (386 aa).

Residue cysteine 5 is the site of S-palmitoyl cysteine attachment. Positions 82–360 constitute a Protein kinase domain; that stretch reads FNPDNQLGEG…SDVVTALEYL (279 aa). Residues 88 to 96 and lysine 111 each bind ATP; that span reads LGEGGFGRV. The Proton acceptor role is filled by aspartate 210. The tract at residues 365–386 is disordered; it reads TEEDGQTVEGEEEEEEDERSKL. A compositionally biased stretch (acidic residues) spans 368–386; that stretch reads DGQTVEGEEEEEEDERSKL.

This sequence belongs to the protein kinase superfamily. Ser/Thr protein kinase family.

It is found in the cell membrane. The catalysed reaction is L-seryl-[protein] + ATP = O-phospho-L-seryl-[protein] + ADP + H(+). It carries out the reaction L-threonyl-[protein] + ATP = O-phospho-L-threonyl-[protein] + ADP + H(+). May be involved in plant defense signaling. The sequence is that of Probable serine/threonine-protein kinase PBL23 from Arabidopsis thaliana (Mouse-ear cress).